Consider the following 503-residue polypeptide: Probable Xaa-Pro aminopeptidase TSTA_094700 (503 aa).

Residues D277, D288, E428, and E467 each coordinate Mn(2+).

The protein belongs to the peptidase M24B family. Mn(2+) is required as a cofactor.

The catalysed reaction is Release of any N-terminal amino acid, including proline, that is linked to proline, even from a dipeptide or tripeptide.. Its function is as follows. Catalyzes the removal of a penultimate prolyl residue from the N-termini of peptides. The protein is Probable Xaa-Pro aminopeptidase TSTA_094700 of Talaromyces stipitatus (strain ATCC 10500 / CBS 375.48 / QM 6759 / NRRL 1006) (Penicillium stipitatum).